Consider the following 359-residue polypeptide: Peptide chain release factor 1 (359 aa).

N5-methylglutamine is present on Q236.

This sequence belongs to the prokaryotic/mitochondrial release factor family. In terms of processing, methylated by PrmC. Methylation increases the termination efficiency of RF1.

It localises to the cytoplasm. Peptide chain release factor 1 directs the termination of translation in response to the peptide chain termination codons UAG and UAA. The protein is Peptide chain release factor 1 of Streptococcus agalactiae serotype Ia (strain ATCC 27591 / A909 / CDC SS700).